The sequence spans 128 residues: MAGKNQSQKKKKSTAPMGNGQPVNQLCQLLGAMIKSQRQQPRGGQAKKKKPEKPHFPLAAEDDIRHHLTQTERSLCLQSIQTAFNQGAGTASLSSSGKVSFQVEFMLPVAHTVRLIRVTSTSASQGAS.

The segment at 1–60 (MAGKNQSQKKKKSTAPMGNGQPVNQLCQLLGAMIKSQRQQPRGGQAKKKKPEKPHFPLAA) is disordered.

This sequence belongs to the arteriviridae nucleocapsid family. In terms of assembly, homooligomer. Interacts with host PABPC1 (via C-terminus). Interacts with host HIC; this interaction may regulate the expression of different cellular genes.

The protein resides in the virion. It is found in the host cytoplasm. It localises to the host nucleus. Multifunctional protein which associates with itself through both covalent and non-covalent interactions to provide the basis for viral assembly. May play a role in the regulation of cellular gene expression during infection by interacting with host HIC. Plays a role in the inhibition of the dsRNA-mediated IFN induction pathway by inhibiting host IRF3 phosphorylation and nuclear translocation. The sequence is that of Nucleoprotein (N) from Sus scrofa (Pig).